The primary structure comprises 354 residues: NAD-dependent epimerase/dehydratase ALT6 (354 aa).

2 residues coordinate NADP(+): Lys-41 and Tyr-174.

It belongs to the NAD(P)-dependent epimerase/dehydratase family. Dihydroflavonol-4-reductase subfamily.

It functions in the pathway mycotoxin biosynthesis. In terms of biological role, NAD-dependent epimerase/dehydratase; part of the gene cluster that mediates the biosynthesis of the host-selective toxins (HSTs) AAL-toxins, sphinganine-analog mycotoxins responsible for Alternaria stem canker on tomato by the tomato pathotype. The biosynthesis starts with the polyketide synthase ALT1-catalyzed C-16 carbon chain assembly from one starter acetyl-CoA unit with malonyl-CoA extender units. ALT1 also selectively transfers methyl groups at the first and the third cycle of chain elongation for AAL toxin. The C-16 polyketide chain is released from the enzyme by a nucleophilic attack of a carbanion, which is derived from R-carbon of glycin by decarboxylation, on the carbonyl carbon of polyketide acyl chain. This step is probably catalyzed by a pyridoxal 5'-phosphate-dependent aminoacyl transferase ALT4. The respective functions of the other enzymes encoded by the cluster have still to be elucidated. The sphingosine N-acyltransferase-like protein ALT7 seems not to act as a resistance/self-tolerance factor against the toxin in the toxin biosynthetic gene cluster, contrary to what is expected. The polypeptide is NAD-dependent epimerase/dehydratase ALT6 (Alternaria alternata (Alternaria rot fungus)).